The chain runs to 361 residues: Polygalacturonase (361 aa).

An N-terminal signal peptide occupies residues 1 to 18; the sequence is MISANSLLISTLCAFAIA. A disulfide bridge connects residues cysteine 27 and cysteine 43. PbH1 repeat units follow at residues 155 to 185, 186 to 207, 208 to 228, 237 to 258, and 266 to 288; these read CSDL…DVGS, SSNV…AVNS, GSTI…SVGS, VNGF…RIKT, and VTNV…VIEG. Aspartate 200 serves as the catalytic Proton donor. Residues cysteine 202 and cysteine 218 are joined by a disulfide bond. The active site involves histidine 222. N-linked (GlcNAc...) asparagine glycosylation is found at asparagine 318 and asparagine 330. Cysteine 350 and cysteine 361 are disulfide-bonded.

The protein belongs to the glycosyl hydrolase 28 family.

It catalyses the reaction (1,4-alpha-D-galacturonosyl)n+m + H2O = (1,4-alpha-D-galacturonosyl)n + (1,4-alpha-D-galacturonosyl)m.. The sequence is that of Polygalacturonase (PGU1) from Saccharomyces cerevisiae (strain ATCC 204508 / S288c) (Baker's yeast).